Consider the following 276-residue polypeptide: Exosome complex component Rrp42 (276 aa).

Belongs to the RNase PH family. Rrp42 subfamily. In terms of assembly, component of the archaeal exosome complex. Forms a hexameric ring-like arrangement composed of 3 Rrp41-Rrp42 heterodimers. The hexameric ring associates with a trimer of Rrp4 and/or Csl4 subunits.

It localises to the cytoplasm. Functionally, non-catalytic component of the exosome, which is a complex involved in RNA degradation. Contributes to the structuring of the Rrp41 active site. This Aeropyrum pernix (strain ATCC 700893 / DSM 11879 / JCM 9820 / NBRC 100138 / K1) protein is Exosome complex component Rrp42.